Consider the following 160-residue polypeptide: Invasion protein IagB (160 aa).

The signal sequence occupies residues 1-19 (MHYFFIIVIWLLSINTAWA).

The protein belongs to the IagB/IpgF/P19 family.

The chain is Invasion protein IagB (iagB) from Salmonella typhi.